The sequence spans 208 residues: UPF0637 protein BcerKBAB4_3786 (208 aa).

This sequence belongs to the UPF0637 family.

This chain is UPF0637 protein BcerKBAB4_3786, found in Bacillus mycoides (strain KBAB4) (Bacillus weihenstephanensis).